Here is a 1303-residue protein sequence, read N- to C-terminus: DNA-directed RNA polymerase subunit beta'' (1303 aa).

4 residues coordinate Zn(2+): cysteine 225, cysteine 299, cysteine 306, and cysteine 309.

It belongs to the RNA polymerase beta' chain family. RpoC2 subfamily. In terms of assembly, in plastids the minimal PEP RNA polymerase catalytic core is composed of four subunits: alpha, beta, beta', and beta''. When a (nuclear-encoded) sigma factor is associated with the core the holoenzyme is formed, which can initiate transcription. Zn(2+) serves as cofactor.

The protein localises to the plastid. The protein resides in the chloroplast. It carries out the reaction RNA(n) + a ribonucleoside 5'-triphosphate = RNA(n+1) + diphosphate. DNA-dependent RNA polymerase catalyzes the transcription of DNA into RNA using the four ribonucleoside triphosphates as substrates. This chain is DNA-directed RNA polymerase subunit beta'', found in Rhodomonas salina (Cryptomonas salina).